Reading from the N-terminus, the 150-residue chain is UPF0098 protein CPn_0877/CP_0992/CPj0877/CpB0906 (150 aa).

This sequence belongs to the UPF0098 family.

This Chlamydia pneumoniae (Chlamydophila pneumoniae) protein is UPF0098 protein CPn_0877/CP_0992/CPj0877/CpB0906.